We begin with the raw amino-acid sequence, 46 residues long: Apamin (46 aa).

Residues 1–27 (MISMLRCIYLFLSVILITSYFVTPVMP) form the signal peptide. Intrachain disulfides connect Cys28-Cys38 and Cys30-Cys42. Residues 40–41 (RR) are essential for toxin activity. His45 is subject to Histidine amide.

Expressed by the venom gland.

Its subcellular location is the secreted. Toxin with unique selectivity to KCa2 channels. Potently blocks human, rat and mouse KCa2.2/KCNN2/SK2 channels (IC(50)=27-140 pM), and moderately blocks human and rat KCa2.3/KCNN3/SK3 channels (IC(50)=0.6-4 nM), and human (IC(50)=0.7-12 nM) and mouse (IC(50)=28 nM) KCa2.1/KCNN1/SK1 channels. Does not show any antimicrobial activity. In vivo, intracerebroventricular injection into rats of a dose of 1 ng results in neurodegeneration specifically in the Purkinje cells of the cerebellum, and induces seizures characterized by hypersensitivity to noise, loss of postural control, paroxystic jerking, and alternating periods of great agitation with tonic-clonic convulsions and periods of total prostration. When administered at high doses, exerts anti-inflammatory, anti-oxidative, anti-fibrotic and anti-apoptotic properties in several models of inflammatory disease, including gouty arthritis, atherosclerosis, atopic dermatitis and acute kidney injury. Down-regulates pro-inflammatory signaling pathways, such as the NF-kappaB and STAT3 pathways, probably by blocking SK channels such as KCa2.2/KCNN2/SK2 and/or KCa2.3/KCNN3/SK3 which are thought to be involved in promoting some inflammatory responses. For example in mouse and rat microglia cells, inhibits LPS-activated KCa2.2/KCNN2/SK2 channels and TLR4 expression leading to the down-regulation of the NF-kappaB, STAT, and MAPK/ERK signaling pathways and, as a consequence, decreases secretion of pro-inflammatory cytokines. The polypeptide is Apamin (Apis mellifera (Honeybee)).